The sequence spans 1228 residues: MMKRYTIILAVFLLFCTVFTFQIKARPYERFADVEKPWIQKHSMDSKLVPANKGNLIQAEIVYQSVSEHSDLVISPVNEIRPANRFPSHRKSFFAENLRASPPVVPVAVDKYAVPVANPMDPENPNAWDVTLKITTKAVTVPVDVVMVIDQSSSMGGQNIARLKSAIASGQRFVKKMLPKGMATEGVRIALVSYDHEPHRLSDFTKDTAFLCQKIRALTPIWGTHTQGGLKMARNIMATSTAVDKHIILMSDGLATEQYPVKNVTTADFIGETGNANDPIDLVIQGAINFPTNYVSNNPSTPLTPNYPTHSSKVGRRNLPESKFDYSNLSARITFDGVAGALVYEPRFPHPYYYYFPCNAAINEAQFAKNSGYTIHTIGYDLGDFALANNSLKLTATDENHFFTATPANLAAAFDNIAQTINIGIQRGEVTDFVAPGFIVKNLTQSGDVTHLLNVSNGTVHYDVSTKKLTWTTGTILSSSEATITYRIYADLDYIQNNDIPVNTTSAIGPDLGGFDTNTEAKLTYTNSNGESNQQLIFPRPTVKLGYGVIKRHYVLVNKDGQPIQANGTVVSSLSEAHVLQSQDFFLPSGGGHIVPKWIKLDKTTEALQYYSVPPTNTVITTADGKRYRFVEVPGSTPNPGQIGISWKKPAGNAYFAYKLLNYWMGGTTDQQSEWDVTSNWTGAQVPLTGEDVEFATTENFGSPAVADLHVPTTNPKIIGNLINNSDKDLVVTTNSQLTINGVVEDNNPNVGTIVVKSSKDNPTGTLLFANPGYNQNVGGTVEFYNQGYDCADCGMYRRSWQYFGIPVNESGFPINDVGGNETVNQWVEPFNGDKWRPAPYAPDTKLQKFKGYQITNDVQAQPTGVYSFKGTLCVCDAFLNLTRTSGVNYSGANLIGNSYTGAIDIKQGIVFPPEVEQTVYLFNTGTRDQWRKLNGSTVSGFRAGQYLSVPKNTAGQDNLPDRIPSMHSFLVKMQNGASCTLQILYDKLLKNTTVNNGNGTQITWRSGNSGSANMPSLVMDVLGNESADRLWIFTDGGLSFGFDNGWDGRKLTEKGLSQLYAMSDIGNDKFQVAGVPELNNLLIGFDADKDGQYTLEFALSDHFAKGGVFLEDLSRGVTRRIVDGGSYSFDAKRGDSGARFRLSYDEEWVESAEVSVLVGTVGKRILITNNCEHACQANVYTTDGKLLIRLDVKPGSKSMTEPLIDGAYVVSLQSPATSSNVRKVVVN.

The first 25 residues, 1-25, serve as a signal peptide directing secretion; sequence MMKRYTIILAVFLLFCTVFTFQIKA. The region spanning 144 to 267 is the VWFA domain; it reads DVVMVIDQSS…QYPVKNVTTA (124 aa).

Minor fimbriae are composed of a structural subunit, most often Mfa1, and the accessory subunits Mfa3, Mfa4 and Mfa5. Fimbrium assembly occurs by linear, head-to-tail oligomerization of fimbrial subunits. This is mediated via insertion of a C-terminal beta-strand from one subunit into a groove in the N-terminal domain of the following subunit.

It localises to the fimbrium. Its function is as follows. Accessory subunit of the minor fimbriae. These filamentous pili are attached to the cell surface; they mediate biofilm formation, adhesion onto host cells and onto other bacteria that are part of the oral microbiome. They play an important role in invasion of periodontal tissues and are recognized as major virulence factors. Fimbrium subunits from different strains have highly divergent sequences, and this correlates with pathogenicity. The chain is Minor fimbrium subunit Mfa5 from Porphyromonas gingivalis (strain ATCC 33277 / DSM 20709 / CIP 103683 / JCM 12257 / NCTC 11834 / 2561).